A 245-amino-acid chain; its full sequence is 8-amino-3,8-dideoxy-manno-octulosonate cytidylyltransferase (245 aa).

Belongs to the KdsB family.

It localises to the cytoplasm. The catalysed reaction is 8-amino-3,8-dideoxy-alpha-D-manno-octulosonate + CTP = CMP-8-amino-3,8-dideoxy-alpha-D-manno-oct-2-ulosonate + diphosphate. It functions in the pathway bacterial outer membrane biogenesis; lipopolysaccharide biosynthesis. Functionally, activates KDO8N (a required 8-carbon sugar) for incorporation into bacterial lipopolysaccharide in the Shewanella genus. The polypeptide is 8-amino-3,8-dideoxy-manno-octulosonate cytidylyltransferase (Shewanella putrefaciens (strain CN-32 / ATCC BAA-453)).